Here is a 235-residue protein sequence, read N- to C-terminus: Proteasome subunit alpha type-2-B (235 aa).

Lys-64 participates in a covalent cross-link: Glycyl lysine isopeptide (Lys-Gly) (interchain with G-Cter in ubiquitin).

The protein belongs to the peptidase T1A family. As to quaternary structure, component of the 20S core complex of the 26S proteasome. The 26S proteasome is composed of a core protease (CP), known as the 20S proteasome, capped at one or both ends by the 19S regulatory particle (RP/PA700). The 20S proteasome core is composed of 28 subunits that are arranged in four stacked rings, resulting in a barrel-shaped structure. The two end rings are each formed by seven alpha subunits, and the two central rings are each formed by seven beta subunits. The catalytic chamber with the active sites is on the inside of the barrel.

It localises to the cytoplasm. Its subcellular location is the nucleus. The proteasome is a multicatalytic proteinase complex which is characterized by its ability to cleave peptides with Arg, Phe, Tyr, Leu, and Glu adjacent to the leaving group at neutral or slightly basic pH. The proteasome has an ATP-dependent proteolytic activity. The chain is Proteasome subunit alpha type-2-B (PAB2) from Arabidopsis thaliana (Mouse-ear cress).